The primary structure comprises 497 residues: Serine/arginine-rich protein PSR (497 aa).

An N-terminal signal peptide occupies residues 1 to 19; the sequence is MYSRCIALVFVGLLASSLA. Residues 20–366 lie on the Extracellular side of the membrane; the sequence is ANCYGPAGKL…HHGLSSQKLG (347 aa). 5 N-linked (GlcNAc...) asparagine glycosylation sites follow: Asn-92, Asn-193, Asn-202, Asn-261, and Asn-283. The helical transmembrane segment at 367 to 387 threads the bilayer; sequence LAIGLPIAGVFLIILIAAAII. Over 388-497 the chain is Cytoplasmic; that stretch reads YYRKRRESEK…ESASRDSDSD (110 aa). The tract at residues 424–450 is necessary for phosphorylation by PSRPK in vitro; sequence MGSKTMQAMLDMRDDDESEHDSDDGYG. Over residues 436–447 the composition is skewed to acidic residues; that stretch reads RDDDESEHDSDD. The interval 436–497 is disordered; that stretch reads RDDDESEHDS…ESASRDSDSD (62 aa). The span at 459–471 shows a compositional bias: basic residues; that stretch reads GRSRSRSRSRSVS. Positions 476 to 497 are enriched in basic and acidic residues; sequence GSRDARSESDPGESASRDSDSD.

In terms of processing, phosphorylated on serine residues in the RS domain by PSRPK.

It is found in the membrane. This is Serine/arginine-rich protein PSR from Physarum polycephalum (Slime mold).